Consider the following 511-residue polypeptide: Bifunctional purine biosynthesis protein PurH (511 aa).

Positions 1–144 constitute an MGS-like domain; the sequence is MKTALLSVSD…KNFASVLPVV (144 aa).

The protein belongs to the PurH family.

The catalysed reaction is (6R)-10-formyltetrahydrofolate + 5-amino-1-(5-phospho-beta-D-ribosyl)imidazole-4-carboxamide = 5-formamido-1-(5-phospho-D-ribosyl)imidazole-4-carboxamide + (6S)-5,6,7,8-tetrahydrofolate. The enzyme catalyses IMP + H2O = 5-formamido-1-(5-phospho-D-ribosyl)imidazole-4-carboxamide. Its pathway is purine metabolism; IMP biosynthesis via de novo pathway; 5-formamido-1-(5-phospho-D-ribosyl)imidazole-4-carboxamide from 5-amino-1-(5-phospho-D-ribosyl)imidazole-4-carboxamide (10-formyl THF route): step 1/1. It functions in the pathway purine metabolism; IMP biosynthesis via de novo pathway; IMP from 5-formamido-1-(5-phospho-D-ribosyl)imidazole-4-carboxamide: step 1/1. The protein is Bifunctional purine biosynthesis protein PurH of Pediococcus pentosaceus (strain ATCC 25745 / CCUG 21536 / LMG 10740 / 183-1w).